Here is a 481-residue protein sequence, read N- to C-terminus: Cobyric acid synthase (481 aa).

The GATase cobBQ-type domain occupies 249 to 436 (GLHIVCLRLS…LHGMFRDDAF (188 aa)). The active-site Nucleophile is the cysteine 331. The active site involves histidine 428.

This sequence belongs to the CobB/CobQ family. CobQ subfamily.

The protein operates within cofactor biosynthesis; adenosylcobalamin biosynthesis. Catalyzes amidations at positions B, D, E, and G on adenosylcobyrinic A,C-diamide. NH(2) groups are provided by glutamine, and one molecule of ATP is hydrogenolyzed for each amidation. The chain is Cobyric acid synthase from Jannaschia sp. (strain CCS1).